The sequence spans 461 residues: Hydroxyproline dehydrogenase (461 aa).

K310 bears the N6-acetyllysine mark.

Belongs to the proline oxidase family. The cofactor is FAD.

It catalyses the reaction trans-4-hydroxy-L-proline + a quinone = (3R,5S)-1-pyrroline-3-hydroxy-5-carboxylate + a quinol + H(+). It carries out the reaction L-proline + a quinone = (S)-1-pyrroline-5-carboxylate + a quinol + H(+). Its pathway is amino-acid degradation; L-proline degradation into L-glutamate; L-glutamate from L-proline: step 1/2. Functionally, dehydrogenase that converts trans-4-L-hydroxyproline to delta-1-pyrroline-3-hydroxy-5-carboxylate (Hyp) using ubiquinone-10 as the terminal electron acceptor. Can also use proline as a substrate but with a very much lower efficiency. Does not react with other diastereomers of Hyp: trans-4-D-hydroxyproline and cis-4-L-hydroxyproline. Ubiquininone analogs such as menadione, duroquinone and ubiquinone-1 react more efficiently than oxygen as the terminal electron acceptor during catalysis. In Bos taurus (Bovine), this protein is Hydroxyproline dehydrogenase.